A 212-amino-acid chain; its full sequence is Thymidylate kinase (212 aa).

An ATP-binding site is contributed by 11 to 18 (GPEGAGKT).

The protein belongs to the thymidylate kinase family.

It carries out the reaction dTMP + ATP = dTDP + ADP. Phosphorylation of dTMP to form dTDP in both de novo and salvage pathways of dTTP synthesis. The chain is Thymidylate kinase from Streptococcus pneumoniae (strain Hungary19A-6).